Consider the following 490-residue polypeptide: Calcium-dependent protein kinase 12 (490 aa).

The region spanning 22-280 (YFLGQVLGQG…AHQVLCHPWI (259 aa)) is the Protein kinase domain. ATP is bound by residues 28–36 (LGQGQFGTT) and lysine 51. The active-site Proton acceptor is aspartate 146. Phosphoserine is present on serine 186. An autoinhibitory domain region spans residues 286-316 (APDKPLDCAVVSRLKKFSAMNKLKKMALRVI). 4 consecutive EF-hand domains span residues 323 to 358 (EEIGGLKELFKMIDTDKSGTITFEELKDSMRRVGSE), 359 to 394 (LMESEIQELLRAADVDESGTIDYGEFLAATIHLNKL), 395 to 430 (EREENLVAAFSFFDKDASGYITIEELQQAWKEFGIN), and 434 to 464 (LDEMIKDIDQDNDGQIDYGEFVAMMRKGNGT). Positions 336, 338, 340, 342, 347, 372, 374, 376, 378, 383, 408, 410, 412, 414, 419, 442, 444, 446, 448, and 453 each coordinate Ca(2+).

It belongs to the protein kinase superfamily. Ser/Thr protein kinase family. CDPK subfamily. Interacts weakly with DI19. Ubiquitously expressed.

The catalysed reaction is L-seryl-[protein] + ATP = O-phospho-L-seryl-[protein] + ADP + H(+). It carries out the reaction L-threonyl-[protein] + ATP = O-phospho-L-threonyl-[protein] + ADP + H(+). Its activity is regulated as follows. Activated by calcium. Autophosphorylation may play an important role in the regulation of the kinase activity. Functionally, may play a role in signal transduction pathways that involve calcium as a second messenger. In Arabidopsis thaliana (Mouse-ear cress), this protein is Calcium-dependent protein kinase 12 (CPK12).